A 1957-amino-acid polypeptide reads, in one-letter code: Sporulation-specific protein 15 (1957 aa).

2 stretches are compositionally biased toward low complexity: residues 1–12 and 19–28; these read MSNQSSSGSNTS and ASSLVSSAAS. The disordered stretch occupies residues 1 to 102; sequence MSNQSSSGSN…STASSALPLT (102 aa). Basic and acidic residues predominate over residues 58–83; sequence SQHEDSSEELKRQEVRGMRRHSDLSI. Residues 90 to 102 are compositionally biased toward polar residues; the sequence is SEGSTASSALPLT. The residue at position 105 (serine 105) is a Phosphoserine. 4 coiled-coil regions span residues 199–785, 804–1235, 1320–1471, and 1481–1723; these read KQSE…FTSL, VNMQ…DLLD, KVVA…SLDD, and EKLG…EQHE.

The protein belongs to the MPC70 family. As to quaternary structure, monomer.

It is found in the cytoplasm. Its subcellular location is the cytoskeleton. The protein resides in the microtubule organizing center. It localises to the spindle pole body. Functionally, has a role in the initiation of spore membrane formation. This chain is Sporulation-specific protein 15 (spo15), found in Schizosaccharomyces pombe (strain 972 / ATCC 24843) (Fission yeast).